The sequence spans 360 residues: LETM1 domain-containing protein 1 (360 aa).

A required and sufficient for mitochondrial import region spans residues 1 to 110; the sequence is MALSRVCWAR…KKARRIKTNM (110 aa). Residues 1-137 lie on the Cytoplasmic side of the membrane; that stretch reads MALSRVCWAR…LRQFRRDVTK (137 aa). The chain crosses the membrane as a helical span at residues 138–158; sequence CLFLGILSIPPFANYLVFLLM. The Mitochondrial intermembrane portion of the chain corresponds to 159 to 360; that stretch reads YLFPRQLLIR…LSINYVGSRR (202 aa). The Letm1 RBD domain occupies 186-360; sequence LRKQSHPEIL…LSINYVGSRR (175 aa).

In terms of assembly, interacts with BRI3BP. Interacts (via C-terminal) with SMARCA4; the interaction regulates transcriptional expression of thermogenic genes in brown adipose tissue.

It localises to the mitochondrion outer membrane. The protein localises to the nucleus. It is found in the mitochondrion inner membrane. In terms of biological role, plays an essential role for mitochondrial structure and function, as well as thermogenesis of brown adipocytes. In brown adipose tissue also localizes in the nucleus where it interacts with the chromatin remodeler SMARCA4 to regulate thermogenic genes expression, such as UCP1. May regulate phagocytosis and inflammatory responses to lipopolysaccharide in macrophages. Involved in tumorigenesis and may function as a negative regulator of the p53/TP53. The chain is LETM1 domain-containing protein 1 from Bos taurus (Bovine).